Consider the following 332-residue polypeptide: Succinylglutamate desuccinylase (332 aa).

His59, Glu62, and His151 together coordinate Zn(2+). Glu215 is an active-site residue.

The protein belongs to the AspA/AstE family. Succinylglutamate desuccinylase subfamily. It depends on Zn(2+) as a cofactor.

The enzyme catalyses N-succinyl-L-glutamate + H2O = L-glutamate + succinate. The protein operates within amino-acid degradation; L-arginine degradation via AST pathway; L-glutamate and succinate from L-arginine: step 5/5. In terms of biological role, transforms N(2)-succinylglutamate into succinate and glutamate. The chain is Succinylglutamate desuccinylase from Pseudomonas aeruginosa (strain LESB58).